We begin with the raw amino-acid sequence, 893 residues long: Alanine--tRNA ligase (893 aa).

Zn(2+) is bound by residues histidine 573, histidine 577, cysteine 676, and histidine 680. The tract at residues 853–872 (LGGGGGGKDDLAQGGGQDPS) is disordered.

The protein belongs to the class-II aminoacyl-tRNA synthetase family. Requires Zn(2+) as cofactor.

The protein localises to the cytoplasm. The enzyme catalyses tRNA(Ala) + L-alanine + ATP = L-alanyl-tRNA(Ala) + AMP + diphosphate. Its function is as follows. Catalyzes the attachment of alanine to tRNA(Ala) in a two-step reaction: alanine is first activated by ATP to form Ala-AMP and then transferred to the acceptor end of tRNA(Ala). Also edits incorrectly charged Ser-tRNA(Ala) and Gly-tRNA(Ala) via its editing domain. The polypeptide is Alanine--tRNA ligase (Kineococcus radiotolerans (strain ATCC BAA-149 / DSM 14245 / SRS30216)).